The primary structure comprises 2839 residues: Neurofibromin (2839 aa).

An N-acetylalanine modification is found at alanine 2. Residues serine 864 and serine 876 each carry the phosphoserine modification. Positions 1251–1482 (HLLYQLLWNM…DAARRFFLDI (232 aa)) constitute a Ras-GAP domain. In terms of domain architecture, CRAL-TRIO spans 1580 to 1738 (EKEEFKALKT…ATLALEEDLK (159 aa)). Residues 1580–1837 (EKEEFKALKT…RTRWELSQPD (258 aa)) form a lipid binding region. A phosphoserine mark is found at serine 2188 and serine 2467. A Phosphothreonine modification is found at threonine 2514. 4 positions are modified to phosphoserine: serine 2515, serine 2521, serine 2523, and serine 2543. The Bipartite nuclear localization signal motif lies at 2555 to 2571 (KRQEMESGITTPPKMRR). Threonine 2565 carries the post-translational modification Phosphothreonine. A phosphoserine mark is found at serine 2597, serine 2802, and serine 2817. The tract at residues 2787–2839 (TSQHSPGIDKENVELSPTTGHCNSGRTRHGSASQVQKQRSAGSFKRNSIKKIV) is disordered. The segment covering 2801–2827 (LSPTTGHCNSGRTRHGSASQVQKQRSA) has biased composition (polar residues).

Interacts with HTR6. Interacts with SPRED2. In terms of processing, ubiquitinated by RNF7/RBX2, leading to its degradation. In terms of tissue distribution, detected in brain, peripheral nerve, lung, colon and muscle.

The protein localises to the nucleus. It localises to the nucleolus. Its subcellular location is the cell membrane. In terms of biological role, stimulates the GTPase activity of Ras. NF1 shows greater affinity for Ras GAP, but lower specific activity. May be a regulator of Ras activity. This Homo sapiens (Human) protein is Neurofibromin (NF1).